Here is a 223-residue protein sequence, read N- to C-terminus: Small ribosomal subunit protein uS3 (223 aa).

Residues isoleucine 39–lysine 108 form the KH type-2 domain.

The protein belongs to the universal ribosomal protein uS3 family. As to quaternary structure, part of the 30S ribosomal subunit. Forms a tight complex with proteins S10 and S14.

Its function is as follows. Binds the lower part of the 30S subunit head. Binds mRNA in the 70S ribosome, positioning it for translation. This Clostridium botulinum (strain Hall / ATCC 3502 / NCTC 13319 / Type A) protein is Small ribosomal subunit protein uS3.